Here is a 263-residue protein sequence, read N- to C-terminus: MKVAVSGFKGRMGHEVVKTVLREEDLELVAVLDHEPKEKNIREIVEFSSLDVPVYANLSEMLEEAKPDCVVDFTTPKVGYSNTKTILEHGVRAVVGTTGFTPEQIESLREIAETKKIGALIAPNFAVGAVLMMQFAQKAAKYFPNVEIIELHHDNKLDAPSGTAVKTAEMMAENRTFVKQGAEDEVELMEGARGAEYEGMRIHSVRLPGLVAHQEVIFGAEGQGLTIRHDSYDRISFMSGVALSIRKTKELETLIYGLENILD.

NAD(+)-binding positions include 7–12 (GFKGRM), 96–98 (GTT), and 122–125 (APNF). Residue H152 is the Proton donor/acceptor of the active site. (S)-2,3,4,5-tetrahydrodipicolinate is bound at residue H153. The active-site Proton donor is the K156. Residue 162 to 163 (GT) coordinates (S)-2,3,4,5-tetrahydrodipicolinate.

The protein belongs to the DapB family.

The protein localises to the cytoplasm. It catalyses the reaction (S)-2,3,4,5-tetrahydrodipicolinate + NAD(+) + H2O = (2S,4S)-4-hydroxy-2,3,4,5-tetrahydrodipicolinate + NADH + H(+). The enzyme catalyses (S)-2,3,4,5-tetrahydrodipicolinate + NADP(+) + H2O = (2S,4S)-4-hydroxy-2,3,4,5-tetrahydrodipicolinate + NADPH + H(+). It functions in the pathway amino-acid biosynthesis; L-lysine biosynthesis via DAP pathway; (S)-tetrahydrodipicolinate from L-aspartate: step 4/4. In terms of biological role, catalyzes the conversion of 4-hydroxy-tetrahydrodipicolinate (HTPA) to tetrahydrodipicolinate. The protein is 4-hydroxy-tetrahydrodipicolinate reductase of Listeria welshimeri serovar 6b (strain ATCC 35897 / DSM 20650 / CCUG 15529 / CIP 8149 / NCTC 11857 / SLCC 5334 / V8).